Consider the following 654-residue polypeptide: Beta-mannosyltransferase 2 (654 aa).

The Cytoplasmic portion of the chain corresponds to 1-37 (MLAWLRHRIRSYNTSTYSSILPSASFGKVYKIGTKLN). A helical transmembrane segment spans residues 38–58 (FTLLALCLLLACSVFFNYFYL). The Extracellular portion of the chain corresponds to 59 to 654 (ADNNGLDIDT…ANGNGKGSSS (596 aa)).

This sequence belongs to the BMT family.

It is found in the membrane. Beta-mannosyltransferase involved in cell wall biosynthesis. Required for the addition of beta-mannose to the acid-labile fraction of cell wall phosphopeptidomannan. This Candida albicans (strain SC5314 / ATCC MYA-2876) (Yeast) protein is Beta-mannosyltransferase 2 (RHD1).